A 192-amino-acid polypeptide reads, in one-letter code: Segregation and condensation protein B (192 aa).

Belongs to the ScpB family. Homodimer. Homodimerization may be required to stabilize the binding of ScpA to the Smc head domains. Component of a cohesin-like complex composed of ScpA, ScpB and the Smc homodimer, in which ScpA and ScpB bind to the head domain of Smc. The presence of the three proteins is required for the association of the complex with DNA.

It is found in the cytoplasm. Participates in chromosomal partition during cell division. May act via the formation of a condensin-like complex containing Smc and ScpA that pull DNA away from mid-cell into both cell halves. The sequence is that of Segregation and condensation protein B from Mycoplasma mobile (strain ATCC 43663 / 163K / NCTC 11711) (Mesomycoplasma mobile).